Reading from the N-terminus, the 150-residue chain is CCAAT/enhancer-binding protein gamma (150 aa).

Lysine 3 is covalently cross-linked (Glycyl lysine isopeptide (Lys-Gly) (interchain with G-Cter in SUMO2)). The segment at 27 to 94 is disordered; that stretch reads GLQQVPQLVP…QKAQDTLQRV (68 aa). Positions 28–37 are enriched in low complexity; it reads LQQVPQLVPA. Positions 56–72 are enriched in basic and acidic residues; it reads SPMDRNSDEYRQRRERN. A bZIP domain is found at 62-125; it reads SDEYRQRRER…SVLKDLFLEH (64 aa). Positions 66-93 are basic motif; that stretch reads RQRRERNNMAVKKSRLKSKQKAQDTLQR. The interval 97 to 118 is leucine-zipper; that stretch reads LKEENERLEAKIKLLTKELSVL. The tract at residues 129–150 is disordered; that stretch reads LADNVQPISTETTATNSDNPGQ. Residues 134 to 150 show a composition bias toward polar residues; sequence QPISTETTATNSDNPGQ.

This sequence belongs to the bZIP family. C/EBP subfamily. Binds DNA as a dimer and can form stable heterodimers with CEBPA. Can form stable heterodimers with CEBPB. Interacts with ZNF638; this interaction increases transcriptional activation. Ubiquitous.

The protein resides in the nucleus. Transcription factor that binds to the promoter and the enhancer regions of target genes. Binds to the promoter and the enhancer of the immunoglobulin heavy chain. Binds to GPE1, a cis-acting element in the G-CSF gene promoter. Binds to the enhancer element PRE-I (positive regulatory element-I) of the IL-4 gene. Binds to the promoter and the enhancer of the alpha-1-fetoprotein gene. The protein is CCAAT/enhancer-binding protein gamma (Cebpg) of Mus musculus (Mouse).